Here is a 314-residue protein sequence, read N- to C-terminus: Ribosomal RNA small subunit methyltransferase H 2 (314 aa).

S-adenosyl-L-methionine is bound by residues 33-35, aspartate 53, tyrosine 80, aspartate 101, and glutamine 108; that span reads AGH. The interval 293–314 is disordered; it reads KELEENSRSKSAKLRVFEKNDL.

It belongs to the methyltransferase superfamily. RsmH family.

It is found in the cytoplasm. It carries out the reaction cytidine(1402) in 16S rRNA + S-adenosyl-L-methionine = N(4)-methylcytidine(1402) in 16S rRNA + S-adenosyl-L-homocysteine + H(+). Specifically methylates the N4 position of cytidine in position 1402 (C1402) of 16S rRNA. The sequence is that of Ribosomal RNA small subunit methyltransferase H 2 from Agathobacter rectalis (strain ATCC 33656 / DSM 3377 / JCM 17463 / KCTC 5835 / VPI 0990) (Eubacterium rectale).